The following is a 93-amino-acid chain: Pyrimidine/purine nucleoside phosphorylase (93 aa).

This sequence belongs to the nucleoside phosphorylase PpnP family.

It carries out the reaction a purine D-ribonucleoside + phosphate = a purine nucleobase + alpha-D-ribose 1-phosphate. The enzyme catalyses adenosine + phosphate = alpha-D-ribose 1-phosphate + adenine. The catalysed reaction is cytidine + phosphate = cytosine + alpha-D-ribose 1-phosphate. It catalyses the reaction guanosine + phosphate = alpha-D-ribose 1-phosphate + guanine. It carries out the reaction inosine + phosphate = alpha-D-ribose 1-phosphate + hypoxanthine. The enzyme catalyses thymidine + phosphate = 2-deoxy-alpha-D-ribose 1-phosphate + thymine. The catalysed reaction is uridine + phosphate = alpha-D-ribose 1-phosphate + uracil. It catalyses the reaction xanthosine + phosphate = alpha-D-ribose 1-phosphate + xanthine. Functionally, catalyzes the phosphorolysis of diverse nucleosides, yielding D-ribose 1-phosphate and the respective free bases. Can use uridine, adenosine, guanosine, cytidine, thymidine, inosine and xanthosine as substrates. Also catalyzes the reverse reactions. The sequence is that of Pyrimidine/purine nucleoside phosphorylase from Sorangium cellulosum (strain So ce56) (Polyangium cellulosum (strain So ce56)).